A 447-amino-acid polypeptide reads, in one-letter code: Serine--tRNA ligase (447 aa).

245–247 provides a ligand contact to L-serine; the sequence is TAE. ATP-binding positions include 276-278 and valine 292; that span reads RKE. Glutamate 299 is a binding site for L-serine. ATP is bound at residue 363–366; it reads ELAS. Threonine 398 lines the L-serine pocket.

Belongs to the class-II aminoacyl-tRNA synthetase family. Type-1 seryl-tRNA synthetase subfamily. Homodimer. The tRNA molecule binds across the dimer.

The protein resides in the cytoplasm. It catalyses the reaction tRNA(Ser) + L-serine + ATP = L-seryl-tRNA(Ser) + AMP + diphosphate + H(+). It carries out the reaction tRNA(Sec) + L-serine + ATP = L-seryl-tRNA(Sec) + AMP + diphosphate + H(+). Its pathway is aminoacyl-tRNA biosynthesis; selenocysteinyl-tRNA(Sec) biosynthesis; L-seryl-tRNA(Sec) from L-serine and tRNA(Sec): step 1/1. Functionally, catalyzes the attachment of serine to tRNA(Ser). Is also able to aminoacylate tRNA(Sec) with serine, to form the misacylated tRNA L-seryl-tRNA(Sec), which will be further converted into selenocysteinyl-tRNA(Sec). The sequence is that of Serine--tRNA ligase from Pyrobaculum neutrophilum (strain DSM 2338 / JCM 9278 / NBRC 100436 / V24Sta) (Thermoproteus neutrophilus).